Consider the following 529-residue polypeptide: Bifunctional purine biosynthesis protein PurH (529 aa).

Positions 1–148 constitute an MGS-like domain; the sequence is MQQRRPVRRA…KNHKDVAIVV (148 aa). An N6-acetyllysine modification is found at lysine 287.

Belongs to the PurH family.

It carries out the reaction (6R)-10-formyltetrahydrofolate + 5-amino-1-(5-phospho-beta-D-ribosyl)imidazole-4-carboxamide = 5-formamido-1-(5-phospho-D-ribosyl)imidazole-4-carboxamide + (6S)-5,6,7,8-tetrahydrofolate. The catalysed reaction is IMP + H2O = 5-formamido-1-(5-phospho-D-ribosyl)imidazole-4-carboxamide. It functions in the pathway purine metabolism; IMP biosynthesis via de novo pathway; 5-formamido-1-(5-phospho-D-ribosyl)imidazole-4-carboxamide from 5-amino-1-(5-phospho-D-ribosyl)imidazole-4-carboxamide (10-formyl THF route): step 1/1. It participates in purine metabolism; IMP biosynthesis via de novo pathway; IMP from 5-formamido-1-(5-phospho-D-ribosyl)imidazole-4-carboxamide: step 1/1. The sequence is that of Bifunctional purine biosynthesis protein PurH from Shigella dysenteriae serotype 1 (strain Sd197).